A 620-amino-acid chain; its full sequence is MENQIQPKAEVAKLELEAVIGFNGHVPTGLKCHPDQEHLIYPLGCTILIQAIKTQEQNFLHGHSNNVSCVTISKSGVYIASGQVTFMGFKADIILWDYKKRELMARLSLHKGKIEALAFSPNDLYLVSLGGPDDGSVVVWSIAKTEAICGSPAAGLNVGNATSVVFSQCHDEMFVTAGNGTIRVWELDLPNRKIWPTECQTGQMKRIVMSISMASDDSFFYLGTTTGDILKMNPRTKLLADTGPAKDKFSLGVSAIKCLKTGGLLVGSGAGLLVFCRSPSYKPIKKIQLQGGITSISLRGEGHQFFVGTEESHIYRVNFTDFKETLVTTCHFEAVEDVVFPFGTAELFATCAKKDIRVWHTLSNRELLRITVPNMTCHGIDFMRDGKSLISAWDDGKIRAFAPETGRLMYVISNAHRIGVTAVATTSDCTRVISGGGEGEVRVWQIGHQTQKLEEALKEHKSSVSCIRVKKNNEECVTASTDGTCIIWDLVRLRRNQMILANTLFQCVCYHPEEFQIITSGTDRKIAYWEVFDGSGIRELDGSLSGSINGMDITPEGVHFVTGGNDHLVKVWDYNEGEVTHVGVGHSGNITRVRISPGNEYIVSVSADGAILRWKYPFPS.

12 WD repeats span residues 62-106 (GHSN…LMAR), 109-150 (LHKG…AICG), 156-195 (LNVG…RKIW), 203-242 (QMKR…LADT), 288-327 (QLQG…ETLV), 330-369 (CHFE…ELLR), 372-411 (VPNM…LMYV), 415-454 (AHRI…QKLE), 459-498 (EHKS…RNQM), 500-539 (LANT…GIRE), 543-582 (SLSG…VTHV), and 585-620 (GHSG…PFPS).

It belongs to the CFAP52 family. Microtubule inner protein component of sperm flagellar doublet microtubules. Interacts with BRCA2. Interacts with the CCT chaperonin complex. Interacts with HSP70. Interacts with AK8. Interacts with CFAP45. Interacts with DNAI1. Interacts with IQDC. In terms of tissue distribution, expressed in respiratory cells and sperm (at protein level).

The protein localises to the cytoplasm. It localises to the cytoskeleton. The protein resides in the cilium axoneme. It is found in the flagellum axoneme. In terms of biological role, microtubule inner protein (MIP) part of the dynein-decorated doublet microtubules (DMTs) in cilia axoneme. Important for proper ciliary and flagellar beating. May act in cooperation with CFAP45 and axonemal dynein subunit DNAH11. May play a role in cell growth and/or survival. The protein is Cilia- and flagella-associated protein 52 (CFAP52) of Sus scrofa (Pig).